We begin with the raw amino-acid sequence, 130 residues long: Small ribosomal subunit protein uS11 (130 aa).

The disordered stretch occupies residues 109–130 (EDITPIPHDGTGRPGGKRGRRV).

This sequence belongs to the universal ribosomal protein uS11 family. As to quaternary structure, part of the 30S ribosomal subunit.

Functionally, located on the platform of the 30S subunit. This Methanobrevibacter smithii (strain ATCC 35061 / DSM 861 / OCM 144 / PS) protein is Small ribosomal subunit protein uS11.